We begin with the raw amino-acid sequence, 243 residues long: Uridylate kinase (243 aa).

ATP is bound at residue 15-18 (KLSG). The tract at residues 23-28 (GEEGFG) is involved in allosteric activation by GTP. Glycine 57 contributes to the UMP binding site. The ATP site is built by glycine 58 and arginine 62. Residues aspartate 77 and 138–145 (TGNPFCTT) contribute to the UMP site. Threonine 165, tyrosine 171, and aspartate 174 together coordinate ATP.

The protein belongs to the UMP kinase family. As to quaternary structure, homohexamer.

It localises to the cytoplasm. The enzyme catalyses UMP + ATP = UDP + ADP. It functions in the pathway pyrimidine metabolism; CTP biosynthesis via de novo pathway; UDP from UMP (UMPK route): step 1/1. With respect to regulation, allosterically activated by GTP. Inhibited by UTP. Its function is as follows. Catalyzes the reversible phosphorylation of UMP to UDP. The chain is Uridylate kinase from Shewanella denitrificans (strain OS217 / ATCC BAA-1090 / DSM 15013).